The primary structure comprises 314 residues: Nitrilase 2 (314 aa).

The CN hydrolase domain maps to 7–269 (VTLGVAQAAP…ETLITARVST (263 aa)). E47 (proton acceptor) is an active-site residue. The active-site Proton donor is the K132. The active-site Nucleophile is the C166.

Belongs to the carbon-nitrogen hydrolase superfamily. Nitrilase family.

The enzyme catalyses a nitrile + 2 H2O = a carboxylate + NH4(+). In terms of biological role, nitrilases catalyze the mild hydrolytic conversion of organonitriles directly to the corresponding carboxylic acids. Catalyzes the production of aryllactic acid derivatives. Mediates the hydrolysis of cyanohydrin to (S)-phenyllactic acid. The protein is Nitrilase 2 of Unknown prokaryotic organism.